Here is a 350-residue protein sequence, read N- to C-terminus: Cytosolic sulfotransferase 18 (350 aa).

M1 carries the N-acetylmethionine modification. Low complexity predominate over residues 1–17; it reads MESETLTAKATITTTTL. The interval 1–28 is disordered; the sequence is MESETLTAKATITTTTLPSHDETKTEST. The span at 19–28 shows a compositional bias: basic and acidic residues; it reads SHDETKTEST. Residue 93 to 98 participates in 3'-phosphoadenylyl sulfate binding; the sequence is KTGTTW. Residue H155 is the Proton acceptor of the active site. 3'-phosphoadenylyl sulfate-binding positions include R177, S185, Y243, and 313–315; that span reads RKG.

It belongs to the sulfotransferase 1 family. As to expression, expressed in roots, leaves and stems. Barely detected in siliques and flowers.

The protein resides in the cytoplasm. The enzyme catalyses an aliphatic (Z)-desulfo-glucosinolate + 3'-phosphoadenylyl sulfate = a (Z)-omega-(methylsulfanyl)-N-sulfo-alkylhydroximate S-glucoside + adenosine 3',5'-bisphosphate + H(+). Its activity is regulated as follows. Inhibited by phosphoadenosine 5'-phosphate (PAP). Functionally, sulfotransferase that utilizes 3'-phospho-5'-adenylyl sulfate (PAPS) as sulfonate donor to catalyze the sulfate conjugation of desulfo-glucosinolates (dsGSs), the final step in the biosynthesis of the glucosinolate core structure. Preferred substrate are the long-chain desulfo-glucosinolates, 7-methylthioheptyl and 8-methylthiooctyl, derived from methionine. Substrate preference is desulfo-benzyl glucosinolate &gt; desulfo-4-methylthiobutyl glucosinolate &gt; desulfo-6-methylthiohexyl glucosinolate &gt; desulfo-3-methylthiopropyl glucosinolate &gt; desulfo-indol-3-yl methyl glucosinolate &gt; desulfo-singrin &gt; desulfo-3-butenyl glucosinolate. The protein is Cytosolic sulfotransferase 18 (SOT18) of Arabidopsis thaliana (Mouse-ear cress).